Here is a 436-residue protein sequence, read N- to C-terminus: 3-ketoacyl-CoA thiolase (436 aa).

The Acyl-thioester intermediate role is filled by Cys99. Active-site proton acceptor residues include His392 and Cys422.

It belongs to the thiolase-like superfamily. Thiolase family. Heterotetramer of two alpha chains (FadJ) and two beta chains (FadI).

The protein resides in the cytoplasm. It catalyses the reaction an acyl-CoA + acetyl-CoA = a 3-oxoacyl-CoA + CoA. The protein operates within lipid metabolism; fatty acid beta-oxidation. Functionally, catalyzes the final step of fatty acid oxidation in which acetyl-CoA is released and the CoA ester of a fatty acid two carbons shorter is formed. The polypeptide is 3-ketoacyl-CoA thiolase (Salmonella heidelberg (strain SL476)).